Consider the following 2310-residue polypeptide: Peroxide stress-activated histidine kinase mak2 (2310 aa).

In terms of domain architecture, Protein kinase spans 12–292; that stretch reads DYAISQLGEF…SATDLCYTIV (281 aa). In terms of domain architecture, GAF spans 1450–1592; the sequence is RLGPLLTTVI…LLSQQIAISV (143 aa). The region spanning 1760–1986 is the Histidine kinase domain; the sequence is NMSHELRTPF…TFWFHVQLRN (227 aa). H1763 carries the post-translational modification Phosphohistidine; by autocatalysis. One can recognise a Response regulatory domain in the interval 2180–2303; sequence YALIAEDNLI…QLVNAVREFV (124 aa). 4-aspartylphosphate is present on D2232.

Its subcellular location is the cytoplasm. It catalyses the reaction ATP + protein L-histidine = ADP + protein N-phospho-L-histidine.. Involved in the control of the SAPK-dependent transcriptional response to peroxide stress. Regulates sty1 activity. The sequence is that of Peroxide stress-activated histidine kinase mak2 (mak2) from Schizosaccharomyces pombe (strain 972 / ATCC 24843) (Fission yeast).